The following is a 235-amino-acid chain: Peroxynitrite isomerase 2 (235 aa).

A GXWXGXG motif is present at residues 82–88 (GVWRGEG). Positions 198 and 225 each coordinate heme b.

The protein belongs to the nitrobindin family. As to quaternary structure, homodimer. Requires heme b as cofactor.

The enzyme catalyses peroxynitrite = nitrate. Its pathway is nitrogen metabolism. Heme-binding protein able to scavenge peroxynitrite and to protect free L-tyrosine against peroxynitrite-mediated nitration, by acting as a peroxynitrite isomerase that converts peroxynitrite to nitrate. Therefore, this protein likely plays a role in peroxynitrite sensing and in the detoxification of reactive nitrogen and oxygen species (RNS and ROS, respectively). Is able to bind nitric oxide (NO) in vitro, but may act as a sensor of peroxynitrite levels in vivo. The chain is Peroxynitrite isomerase 2 from Mycolicibacterium paratuberculosis (strain ATCC BAA-968 / K-10) (Mycobacterium paratuberculosis).